The sequence spans 149 residues: Transcriptional repressor NrdR (149 aa).

A zinc finger spans residues 3–34 (CPFCSATDTKVIDSRLVAEGHQVRRRRECTEC). One can recognise an ATP-cone domain in the interval 49-139 (PRVIKRDGTR…VYRAFEDVSE (91 aa)).

The protein belongs to the NrdR family. Requires Zn(2+) as cofactor.

Functionally, negatively regulates transcription of bacterial ribonucleotide reductase nrd genes and operons by binding to NrdR-boxes. The sequence is that of Transcriptional repressor NrdR from Shewanella sp. (strain MR-4).